The chain runs to 95 residues: Aspartyl/glutamyl-tRNA(Asn/Gln) amidotransferase subunit C (95 aa).

The protein belongs to the GatC family. As to quaternary structure, heterotrimer of A, B and C subunits.

The catalysed reaction is L-glutamyl-tRNA(Gln) + L-glutamine + ATP + H2O = L-glutaminyl-tRNA(Gln) + L-glutamate + ADP + phosphate + H(+). The enzyme catalyses L-aspartyl-tRNA(Asn) + L-glutamine + ATP + H2O = L-asparaginyl-tRNA(Asn) + L-glutamate + ADP + phosphate + 2 H(+). Functionally, allows the formation of correctly charged Asn-tRNA(Asn) or Gln-tRNA(Gln) through the transamidation of misacylated Asp-tRNA(Asn) or Glu-tRNA(Gln) in organisms which lack either or both of asparaginyl-tRNA or glutaminyl-tRNA synthetases. The reaction takes place in the presence of glutamine and ATP through an activated phospho-Asp-tRNA(Asn) or phospho-Glu-tRNA(Gln). The chain is Aspartyl/glutamyl-tRNA(Asn/Gln) amidotransferase subunit C from Rhodospirillum centenum (strain ATCC 51521 / SW).